The following is a 719-amino-acid chain: Potassium channel KOR2 (719 aa).

Residues M1–R63 are Cytoplasmic-facing. The helical transmembrane segment at I64 to F84 threads the bilayer. Topologically, residues S85 to Q93 are extracellular. A helical membrane pass occupies residues L94–L114. Residues A115–K137 lie on the Cytoplasmic side of the membrane. A helical membrane pass occupies residues G138–G158. Over R159 to R164 the chain is Extracellular. The helical; Voltage-sensor transmembrane segment at W165 to E185 threads the bilayer. The Cytoplasmic segment spans residues K186–K199. The chain crosses the membrane as a helical span at residues L200–T220. Topologically, residues T221–V255 are extracellular. The pore-forming intramembrane region spans T256–A275. At V276–V285 the chain is on the extracellular side. The chain crosses the membrane as a helical span at residues V286–I306. At V307–N719 the chain is on the cytoplasmic side. A nucleoside 3',5'-cyclic phosphate is bound at residue L383–G503. ANK repeat units follow at residues K523 to K556, D560 to S589, F593 to L622, D624 to C653, and D657 to A686.

This sequence belongs to the potassium channel family. Plant (TC 1.A.1.4) subfamily.

Its subcellular location is the membrane. Probable outward-rectifying potassium channel. The polypeptide is Potassium channel KOR2 (Oryza sativa subsp. japonica (Rice)).